The primary structure comprises 174 residues: WAP four-disulfide core domain protein 2 (174 aa).

The N-terminal stretch at 1-25 (MPACRLCLLAAGLLLGLLLFTPISA) is a signal peptide. Residues 29–74 (DAEKPGECPQLEPITDCVLECTLDKDCADNRKCCQAGCSSVCSKPN) enclose the WAP 1 domain. Disulfide bonds link C36–C62, C45–C66, C49–C61, and C55–C70. The disordered stretch occupies residues 68–117 (SVCSKPNGPSEGELSGTDTKLSETGTTTQSAGLDHTTKPPGGQVSTKPPA). Residues 83-98 (GTDTKLSETGTTTQSA) show a composition bias toward polar residues. In terms of domain architecture, WAP 2 spans 125–173 (VREKQGTCPSVDIPKLGLCEDQCQVDSQCSGNMKCCRNGCGKMACTTPK). 4 disulfide bridges follow: C132–C160, C143–C164, C147–C159, and C153–C169.

Homotrimer; disulfide-linked.

Its subcellular location is the secreted. Functionally, broad range protease inhibitor. The sequence is that of WAP four-disulfide core domain protein 2 (Wfdc2) from Mus musculus (Mouse).